The chain runs to 175 residues: Co-chaperone protein HscB homolog (175 aa).

The region spanning 7–79 (SHFDLFDLPA…LKRATYLLHL (73 aa)) is the J domain.

It belongs to the HscB family. Interacts with HscA and stimulates its ATPase activity.

Functionally, co-chaperone involved in the maturation of iron-sulfur cluster-containing proteins. Seems to help targeting proteins to be folded toward HscA. The polypeptide is Co-chaperone protein HscB homolog (Paraburkholderia xenovorans (strain LB400)).